The chain runs to 356 residues: Alpha-N-acetylneuraminide alpha-2,8-sialyltransferase (356 aa).

Over 1 to 29 (MSPCGRARRQTSRGAMAVLAWKFPRTRLP) the chain is Cytoplasmic. The helical; Signal-anchor for type II membrane protein transmembrane segment at 30–48 (MGASALCVVVLCWLYIFPV) threads the bilayer. The Lumenal portion of the chain corresponds to 49–356 (YRLPNEKEIV…CEDTSLQPTS (308 aa)). N-linked (GlcNAc...) asparagine glycosylation is found at N71 and N119. 2 disulfide bridges follow: C138-C287 and C152-C347. CMP-N-acetyl-beta-neuraminate is bound by residues N143 and N166. N-linked (GlcNAc...) asparagine glycosylation is found at N214 and N245. CMP-N-acetyl-beta-neuraminate is bound by residues S274, T275, G276, W296, and H310. H322 (proton donor/acceptor) is an active-site residue.

This sequence belongs to the glycosyltransferase 29 family. Strongly expressed in melanoma cell lines, adult and fetal brain and to a lesser extent in adult and fetal lung.

The protein localises to the golgi apparatus membrane. It catalyses the reaction an N-acetyl-alpha-neuraminyl-(2-&gt;3)-beta-D-galactosyl derivative + CMP-N-acetyl-beta-neuraminate = an N-acetyl-alpha-neuraminyl-(2-&gt;8)-N-acetyl-alpha-neuraminyl-(2-&gt;3)-beta-D-galactosyl derivative + CMP + H(+). The enzyme catalyses a ganglioside GM3 (d18:1(4E)) + CMP-N-acetyl-beta-neuraminate = a ganglioside GD3 (d18:1(4E)) + CMP + H(+). The catalysed reaction is a ganglioside GD3 (d18:1(4E)) + CMP-N-acetyl-beta-neuraminate = a ganglioside GT3 (d18:1(4E)) + CMP + H(+). It carries out the reaction a ganglioside GD1a (d18:1(4E)) + CMP-N-acetyl-beta-neuraminate = a ganglioside GT1a (d18:1(4E)) + CMP + H(+). It catalyses the reaction a ganglioside GT1b (d18:1(4E)) + CMP-N-acetyl-beta-neuraminate = a ganglioside GQ1b (d18:1(4E)) + CMP + H(+). The enzyme catalyses a ganglioside GM1b (d18:1(4E)) + CMP-N-acetyl-beta-neuraminate = a ganglioside GD1c (d18:1(4E)) + CMP + H(+). The catalysed reaction is a ganglioside GD3 + CMP-N-acetyl-beta-neuraminate = a ganglioside GT3 + CMP + H(+). It carries out the reaction [alpha-N-acetylneuraminyl-(2-&gt;8)](n)-alpha-N-acetylneuraminyl-(2-&gt;8)-alpha-N-acetylneuraminyl-(2-&gt;3)-beta-D-galactosyl-(1-&gt;4)-beta-D-glucosyl-(1&lt;-&gt;1)-ceramide + CMP-N-acetyl-beta-neuraminate = [alpha-N-acetylneuraminyl-(2-&gt;8)](n+1)-alpha-N-acetylneuraminyl-(2-&gt;8)-alpha-N-acetylneuraminyl-(2-&gt;3)-beta-D-galactosyl-(1-&gt;4)-beta-D-glucosyl-(1&lt;-&gt;1)-ceramide + CMP + H(+). It participates in protein modification; protein glycosylation. The protein operates within lipid metabolism; sphingolipid metabolism. Its function is as follows. Catalyzes the addition of sialic acid in alpha 2,8-linkage to the sialic acid moiety of the ganglioside GM3 to form ganglioside GD3; gangliosides are a subfamily of complex glycosphingolipds that contain one or more residues of sialic acid. Can catalyze the addition of a second alpha-2,8-sialic acid to GD3 to form GT3. Can use GM1b, GD1a and GT1b as acceptor substrates to synthesize GD1c, GT1a and GQ1b respectively. Can synthesize unusual tetra- and pentasialylated lactosylceramide derivatives identified as GQ3 (II3Neu5Ac4-Gg2Cer) and GP3 (II3Neu5Ac5-Gg2Cer) in breast cancer cells. The protein is Alpha-N-acetylneuraminide alpha-2,8-sialyltransferase of Homo sapiens (Human).